The following is a 208-amino-acid chain: Uridine kinase (208 aa).

11–18 (GGTGSGKS) serves as a coordination point for ATP.

This sequence belongs to the uridine kinase family.

It localises to the cytoplasm. The enzyme catalyses uridine + ATP = UMP + ADP + H(+). It catalyses the reaction cytidine + ATP = CMP + ADP + H(+). It participates in pyrimidine metabolism; CTP biosynthesis via salvage pathway; CTP from cytidine: step 1/3. It functions in the pathway pyrimidine metabolism; UMP biosynthesis via salvage pathway; UMP from uridine: step 1/1. The sequence is that of Uridine kinase from Clostridium perfringens (strain ATCC 13124 / DSM 756 / JCM 1290 / NCIMB 6125 / NCTC 8237 / Type A).